The following is a 257-amino-acid chain: Hydroxyethylthiazole kinase 1 (257 aa).

Methionine 41 is a binding site for substrate. Residues lysine 117 and threonine 162 each coordinate ATP. Residue glycine 189 coordinates substrate.

The protein belongs to the Thz kinase family. Requires Mg(2+) as cofactor.

The catalysed reaction is 5-(2-hydroxyethyl)-4-methylthiazole + ATP = 4-methyl-5-(2-phosphooxyethyl)-thiazole + ADP + H(+). The protein operates within cofactor biosynthesis; thiamine diphosphate biosynthesis; 4-methyl-5-(2-phosphoethyl)-thiazole from 5-(2-hydroxyethyl)-4-methylthiazole: step 1/1. Catalyzes the phosphorylation of the hydroxyl group of 4-methyl-5-beta-hydroxyethylthiazole (THZ). This chain is Hydroxyethylthiazole kinase 1, found in Oceanobacillus iheyensis (strain DSM 14371 / CIP 107618 / JCM 11309 / KCTC 3954 / HTE831).